Reading from the N-terminus, the 243-residue chain is 23S rRNA (guanosine-2'-O-)-methyltransferase RlmB (243 aa).

Residues glycine 196, isoleucine 216, and leucine 225 each coordinate S-adenosyl-L-methionine.

It belongs to the class IV-like SAM-binding methyltransferase superfamily. RNA methyltransferase TrmH family. RlmB subfamily. Homodimer.

It localises to the cytoplasm. The catalysed reaction is guanosine(2251) in 23S rRNA + S-adenosyl-L-methionine = 2'-O-methylguanosine(2251) in 23S rRNA + S-adenosyl-L-homocysteine + H(+). Functionally, specifically methylates the ribose of guanosine 2251 in 23S rRNA. The polypeptide is 23S rRNA (guanosine-2'-O-)-methyltransferase RlmB (Shigella flexneri).